A 681-amino-acid chain; its full sequence is Peroxisomal acyl-coenzyme A oxidase 2 (681 aa).

2 positions are modified to phosphoserine: Ser3 and Ser9. N6-succinyllysine is present on residues Lys66, Lys137, Lys303, Lys453, Lys561, and Lys667. The short motif at 679 to 681 is the Microbody targeting signal element; it reads HKM.

This sequence belongs to the acyl-CoA oxidase family. Homodimer. The cofactor is FAD. Most abundant in liver. Also expressed in kidney. Not present in any other tissues tested.

The protein localises to the peroxisome. It catalyses the reaction (25R)-3alpha,7alpha,12alpha-trihydroxy-5beta-cholestan-26-oyl-CoA + A + H2O = (24R,25R)-3alpha,7alpha,12alpha,24-tetrahydroxy-5beta-cholestan-26-oyl-CoA + AH2. The enzyme catalyses (25S)-3alpha,7alpha,12alpha-trihydroxy-5beta-cholestan-26-oyl-CoA + O2 = (24E)-3alpha,7alpha,12alpha-trihydroxy-5beta-cholest-24-en-26-oyl-CoA + H2O2. Its function is as follows. Oxidizes the CoA esters of the bile acid intermediates di- and tri-hydroxycoprostanic acids. Capable of oxidizing short as well as long chain 2-methyl branched fatty acids. In Rattus norvegicus (Rat), this protein is Peroxisomal acyl-coenzyme A oxidase 2.